A 273-amino-acid chain; its full sequence is Giardin subunit beta (273 aa).

Residues 1 to 19 are nonhelical region; the sequence is MSMFTSTRTLTQTMDKPDD. Positions 20–273 are rod; sequence LTRSATETAV…GGLSMVTKHQ (254 aa). Coiled coils occupy residues 123–175 and 211–263; these read DTLN…YDQL and NTKL…SKIQ.

The protein belongs to the SF-assemblin family. As to quaternary structure, interacts with BOP1 (via C-terminal WD repeats).

It localises to the cytoplasm. It is found in the cytoskeleton. Giardins are involved in parasite attachment to the intestinal mucosa and in the cytoskeletal disassembly and reassembly that marks the transition from infectious trophozoite to transmissible cyst. They may interact with other cytoskeletal proteins such as microtubules in the microribbons or crossbridges, to maintain the integrity of the ventral disk. In Giardia intestinalis (Giardia lamblia), this protein is Giardin subunit beta.